Here is a 334-residue protein sequence, read N- to C-terminus: CRISPR-associated protein Cas1 3 (334 aa).

Mn(2+) is bound by residues Glu-165, His-230, and Glu-245.

Belongs to the CRISPR-associated endonuclease Cas1 family. In terms of assembly, homodimer, forms a heterotetramer with a Cas2 homodimer. It depends on Mg(2+) as a cofactor. The cofactor is Mn(2+).

Functionally, CRISPR (clustered regularly interspaced short palindromic repeat), is an adaptive immune system that provides protection against mobile genetic elements (viruses, transposable elements and conjugative plasmids). CRISPR clusters contain spacers, sequences complementary to antecedent mobile elements, and target invading nucleic acids. CRISPR clusters are transcribed and processed into CRISPR RNA (crRNA). Acts as a dsDNA endonuclease. Involved in the integration of spacer DNA into the CRISPR cassette. This chain is CRISPR-associated protein Cas1 3, found in Methanobrevibacter ruminantium (strain ATCC 35063 / DSM 1093 / JCM 13430 / OCM 146 / M1) (Methanobacterium ruminantium).